Reading from the N-terminus, the 151-residue chain is Large ribosomal subunit protein bL9 (151 aa).

This sequence belongs to the bacterial ribosomal protein bL9 family.

Functionally, binds to the 23S rRNA. This chain is Large ribosomal subunit protein bL9, found in Chlorobium limicola (strain DSM 245 / NBRC 103803 / 6330).